The following is a 100-amino-acid chain: Trp operon repressor homolog (100 aa).

A DNA-binding region spans residues Gln-59–Ser-82. Basic and acidic residues predominate over residues Asn-78–Thr-93. The tract at residues Asn-78–Gln-100 is disordered.

Belongs to the TrpR family. In terms of assembly, homodimer.

Its subcellular location is the cytoplasm. This protein is an aporepressor. When complexed with L-tryptophan it binds the operator region of the trp operon and prevents the initiation of transcription. This chain is Trp operon repressor homolog, found in Vibrio campbellii (strain ATCC BAA-1116).